The following is a 414-amino-acid chain: Serine hydroxymethyltransferase (414 aa).

Residues L116 and 120–122 (GHL) each bind (6S)-5,6,7,8-tetrahydrofolate. K224 carries the post-translational modification N6-(pyridoxal phosphate)lysine. (6S)-5,6,7,8-tetrahydrofolate is bound by residues E240 and 348-350 (SPF).

This sequence belongs to the SHMT family. As to quaternary structure, homodimer. Requires pyridoxal 5'-phosphate as cofactor.

It is found in the cytoplasm. The catalysed reaction is (6R)-5,10-methylene-5,6,7,8-tetrahydrofolate + glycine + H2O = (6S)-5,6,7,8-tetrahydrofolate + L-serine. It participates in one-carbon metabolism; tetrahydrofolate interconversion. The protein operates within amino-acid biosynthesis; glycine biosynthesis; glycine from L-serine: step 1/1. Catalyzes the reversible interconversion of serine and glycine with tetrahydrofolate (THF) serving as the one-carbon carrier. This reaction serves as the major source of one-carbon groups required for the biosynthesis of purines, thymidylate, methionine, and other important biomolecules. Also exhibits THF-independent aldolase activity toward beta-hydroxyamino acids, producing glycine and aldehydes, via a retro-aldol mechanism. In Campylobacter jejuni subsp. jejuni serotype O:23/36 (strain 81-176), this protein is Serine hydroxymethyltransferase.